We begin with the raw amino-acid sequence, 426 residues long: Serine/threonine-protein kinase ssn3 (426 aa).

Residues 39–368 (YHIVGFISSG…AKEALEHPYF (330 aa)) form the Protein kinase domain. Residues 45–53 (ISSGTYGRV) and Lys-69 each bind ATP. The Proton acceptor role is filled by Asp-171. A compositionally biased stretch (basic and acidic residues) spans 389-398 (RRITHDDNDI). The segment at 389–426 (RRITHDDNDIRSGSLPGTKRSGLPDDSLMSRAAKRMKE) is disordered.

Belongs to the protein kinase superfamily. CMGC Ser/Thr protein kinase family. CDC2/CDKX subfamily. Component of the srb8-11 complex, a regulatory module of the Mediator complex. The cofactor is Mg(2+).

It is found in the nucleus. The enzyme catalyses L-seryl-[protein] + ATP = O-phospho-L-seryl-[protein] + ADP + H(+). It catalyses the reaction L-threonyl-[protein] + ATP = O-phospho-L-threonyl-[protein] + ADP + H(+). It carries out the reaction [DNA-directed RNA polymerase] + ATP = phospho-[DNA-directed RNA polymerase] + ADP + H(+). In terms of biological role, component of the srb8-11 complex. The srb8-11 complex is a regulatory module of the Mediator complex which is itself involved in regulation of basal and activated RNA polymerase II-dependent transcription. The srb8-11 complex may be involved in the transcriptional repression of a subset of genes regulated by Mediator. It may inhibit the association of the Mediator complex with RNA polymerase II to form the holoenzyme complex. The srb8-11 complex phosphorylates the C-terminal domain (CTD) of the largest subunit of RNA polymerase II. The protein is Serine/threonine-protein kinase ssn3 (ssn3) of Emericella nidulans (strain FGSC A4 / ATCC 38163 / CBS 112.46 / NRRL 194 / M139) (Aspergillus nidulans).